The chain runs to 132 residues: Small ribosomal subunit protein uS8c (132 aa).

This sequence belongs to the universal ribosomal protein uS8 family. Part of the 30S ribosomal subunit.

The protein localises to the plastid. It is found in the chloroplast. Functionally, one of the primary rRNA binding proteins, it binds directly to 16S rRNA central domain where it helps coordinate assembly of the platform of the 30S subunit. The protein is Small ribosomal subunit protein uS8c (rps8) of Drimys granadensis.